We begin with the raw amino-acid sequence, 354 residues long: Histone-lysine N-methyltransferase SUVR3 (354 aa).

Residues 143–188 (SGCECERCEEGYCKCLAFAGMEEIANECGSGCGCGSDCSNRVTQKG) enclose the Pre-SET domain. Zn(2+) is bound by residues cysteine 145, cysteine 147, cysteine 150, cysteine 155, cysteine 157, cysteine 170, cysteine 174, cysteine 176, and cysteine 180. The SET domain maps to 191–323 (VSLKIVRDEK…AEEELSFSYG (133 aa)). S-adenosyl-L-methionine contacts are provided by residues 201–203 (KGW) and 281–282 (NH). Residue cysteine 284 coordinates Zn(2+). Tyrosine 322 lines the S-adenosyl-L-methionine pocket. Residues 334 to 350 (DKLNCSCGSSCCLGTLP) form the Post-SET domain. Cysteine 338, cysteine 340, and cysteine 345 together coordinate Zn(2+).

The protein belongs to the class V-like SAM-binding methyltransferase superfamily.

Its subcellular location is the nucleus. It localises to the chromosome. The catalysed reaction is L-lysyl-[histone] + S-adenosyl-L-methionine = N(6)-methyl-L-lysyl-[histone] + S-adenosyl-L-homocysteine + H(+). Histone methyltransferase. This Arabidopsis thaliana (Mouse-ear cress) protein is Histone-lysine N-methyltransferase SUVR3 (SUVR3).